The following is a 435-amino-acid chain: Trigger factor (435 aa).

One can recognise a PPIase FKBP-type domain in the interval 161–246 (GKRVSIDFVG…VNKVEARELP (86 aa)).

It belongs to the FKBP-type PPIase family. Tig subfamily.

It localises to the cytoplasm. The catalysed reaction is [protein]-peptidylproline (omega=180) = [protein]-peptidylproline (omega=0). Functionally, involved in protein export. Acts as a chaperone by maintaining the newly synthesized protein in an open conformation. Functions as a peptidyl-prolyl cis-trans isomerase. This chain is Trigger factor, found in Vibrio campbellii (strain ATCC BAA-1116).